We begin with the raw amino-acid sequence, 411 residues long: LL-diaminopimelate aminotransferase (411 aa).

Substrate is bound by residues Tyr-15 and Gly-42. Pyridoxal 5'-phosphate contacts are provided by residues Tyr-72, Ser-108–Lys-109, Tyr-132, Asn-187, Tyr-218, and Ser-246–Ser-248. 3 residues coordinate substrate: Lys-109, Tyr-132, and Asn-187. Lys-249 bears the N6-(pyridoxal phosphate)lysine mark. The pyridoxal 5'-phosphate site is built by Arg-257 and Asn-292. The substrate site is built by Asn-292 and Arg-388.

Belongs to the class-I pyridoxal-phosphate-dependent aminotransferase family. LL-diaminopimelate aminotransferase subfamily. Homodimer. Pyridoxal 5'-phosphate serves as cofactor.

The catalysed reaction is (2S,6S)-2,6-diaminopimelate + 2-oxoglutarate = (S)-2,3,4,5-tetrahydrodipicolinate + L-glutamate + H2O + H(+). It participates in amino-acid biosynthesis; L-lysine biosynthesis via DAP pathway; LL-2,6-diaminopimelate from (S)-tetrahydrodipicolinate (aminotransferase route): step 1/1. Its function is as follows. Involved in the synthesis of meso-diaminopimelate (m-DAP or DL-DAP), required for both lysine and peptidoglycan biosynthesis. Catalyzes the direct conversion of tetrahydrodipicolinate to LL-diaminopimelate. This Gloeothece citriformis (strain PCC 7424) (Cyanothece sp. (strain PCC 7424)) protein is LL-diaminopimelate aminotransferase.